Consider the following 473-residue polypeptide: H(+)/Cl(-) exchange transporter ClcA (473 aa).

At 1-32 (MKTDNSTFLAQQIVRLRRRDQIRRLMQRDKTP) the chain is on the cytoplasmic side. Residues 33-69 (LAILFMAAVVGTLTGLVGVAFEKAVSWVQNMRIGALV) traverse the membrane as a helical segment. The Periplasmic segment spans residues 70 to 76 (QVADHAF). The helical transmembrane segment at 77–100 (LLWPLAFILSALLAMVGYFLVRKF) threads the bilayer. Residues 106–110 (GSGIP) carry the Selectivity filter part_1 motif. Ser-107 provides a ligand contact to chloride. The segment at residues 109–116 (IPEIEGAL) is an intramembrane region (helical). At 117-123 (EELRPVR) the chain is on the cytoplasmic side. The next 2 helical transmembrane spans lie at 124–141 (WWRV…TLGA) and 148–166 (EGPT…LDVF). The Selectivity filter part_2 signature appears at 146 to 150 (GREGP). Topologically, residues 167-176 (RMRSAEARHT) are cytoplasmic. Intramembrane regions (helical) lie at residues 177-189 (LLAT…LSAA) and 193-201 (PLAGILFII). At 202–214 (EEMRPQFRYNLIS) the chain is on the cytoplasmic side. A helical transmembrane segment spans residues 215–232 (IKAVFTGVIMSSIVFRIF). Residues 233 to 252 (NGEAPIIEVGKLSDAPVNTL) are Periplasmic-facing. The helical transmembrane segment at 253–281 (WLYLILGIIFGCVGPVFNSLVLRTQDMFQ) threads the bilayer. At 282–287 (RFHGGE) the chain is on the cytoplasmic side. The chain crosses the membrane as a helical span at residues 288-309 (IKKWVLMGGAIGGLCGILGLIE). Over 310–329 (PEAAGGGFNLIPIAAAGNFS) the chain is Periplasmic. Helical transmembrane passes span 330–349 (VGLL…LCFS) and 355–376 (GIFA…MAAA). The Selectivity filter part_3 motif lies at 355-359 (GIFAP). Residues Ile-356 and Phe-357 each coordinate chloride. The Periplasmic segment spans residues 377–386 (VLFPQYHLEA). The helical intramembrane region spans 387-401 (GTFAIAGMGALMAAS). The segment at residues 402–404 (VRA) is an intramembrane region (note=Loop between two helices). The helical intramembrane region spans 405-416 (PLTGIVLVLEMT). The segment at residues 417–421 (DNYQL) is an intramembrane region (note=Loop between two helices). Residues 422-438 (ILPMIITCLGATLLAQF) form a helical membrane-spanning segment. The Cytoplasmic portion of the chain corresponds to 439–473 (LGGKPLYSTILARTLAKQDAEQAAKNQNAPAGENT). Tyr-445 contributes to the chloride binding site.

The protein belongs to the chloride channel (TC 2.A.49) family. ClcA subfamily. In terms of assembly, homodimer.

Its subcellular location is the cell inner membrane. The enzyme catalyses 2 chloride(in) + H(+)(out) = 2 chloride(out) + H(+)(in). Proton-coupled chloride transporter. Functions as antiport system and exchanges two chloride ions for 1 proton. Probably acts as an electrical shunt for an outwardly-directed proton pump that is linked to amino acid decarboxylation, as part of the extreme acid resistance (XAR) response. The protein is H(+)/Cl(-) exchange transporter ClcA of Salmonella schwarzengrund (strain CVM19633).